A 195-amino-acid chain; its full sequence is uncharacterized protein (195 aa).

2 disordered regions span residues M1–Y51 and S160–N195. Residues S13–P28 are compositionally biased toward polar residues. The segment covering Y170–R189 has biased composition (basic residues).

This is an uncharacterized protein from Acanthamoeba polyphaga mimivirus (APMV).